Reading from the N-terminus, the 591-residue chain is General transcription and DNA repair factor IIH subunit TFB1-1 (591 aa).

2 consecutive BSD domains span residues 112–166 (STSS…GKDS) and 191–243 (RTNR…YLYS).

The protein belongs to the TFB1 family. As to quaternary structure, component of the 7-subunit TFIIH core complex composed of XPB, XPD, TFB1/GTF2H1, GTF2H2/P44, TFB4/GTF2H3, TFB2/GTF2H4 and TFB5/GTF2H5, which is active in NER. The core complex associates with the 3-subunit CDK-activating kinase (CAK) module composed of CYCH1/cyclin H1, CDKD and MAT1/At4g30820 to form the 10-subunit holoenzyme (holo-TFIIH) active in transcription.

Its subcellular location is the nucleus. Component of the general transcription and DNA repair factor IIH (TFIIH) core complex, which is involved in general and transcription-coupled nucleotide excision repair (NER) of damaged DNA and, when complexed to CAK, in RNA transcription by RNA polymerase II. In NER, TFIIH acts by opening DNA around the lesion to allow the excision of the damaged oligonucleotide and its replacement by a new DNA fragment. In transcription, TFIIH has an essential role in transcription initiation. When the pre-initiation complex (PIC) has been established, TFIIH is required for promoter opening and promoter escape. Phosphorylation of the C-terminal tail (CTD) of the largest subunit of RNA polymerase II by the kinase module CAK controls the initiation of transcription. This chain is General transcription and DNA repair factor IIH subunit TFB1-1, found in Arabidopsis thaliana (Mouse-ear cress).